The chain runs to 259 residues: Leucine-rich repeat-containing protein 61 (259 aa).

3 LRR repeats span residues 54 to 75 (NLEW…ASLR), 76 to 97 (QLAV…AACE), and 98 to 119 (NLQS…QCLA). Positions 138-178 (NPLCANASYWAVVRELLPGLKVIDGERVSGRGSELYQLCRD) constitute an LRRCT domain.

The chain is Leucine-rich repeat-containing protein 61 (Lrrc61) from Mus musculus (Mouse).